We begin with the raw amino-acid sequence, 295 residues long: 5,10-methylenetetrahydrofolate reductase (295 aa).

The active-site Proton donor/acceptor is E28. Position 59 (T59) interacts with NADH. The FAD site is built by H89, R119, G120, D121, A133, Y153, H157, A160, D166, N169, R172, and K173. D121 contacts (6S)-5-methyl-5,6,7,8-tetrahydrofolate. Q184 serves as a coordination point for NADH. (6S)-5-methyl-5,6,7,8-tetrahydrofolate contacts are provided by Q184, Q220, and K280.

It belongs to the methylenetetrahydrofolate reductase family. FAD serves as cofactor.

It carries out the reaction (6S)-5-methyl-5,6,7,8-tetrahydrofolate + NAD(+) = (6R)-5,10-methylene-5,6,7,8-tetrahydrofolate + NADH + H(+). Its pathway is one-carbon metabolism; tetrahydrofolate interconversion. It participates in amino-acid biosynthesis; L-methionine biosynthesis via de novo pathway. Its function is as follows. Catalyzes the NADH-dependent reduction of 5,10-methylenetetrahydrofolate to 5-methyltetrahydrofolate. Is required to provide the methyl group necessary for methionine synthetase to convert homocysteine to methionine; the methyl group is given by 5-methyltetrahydrofolate. The protein is 5,10-methylenetetrahydrofolate reductase (metF) of Buchnera aphidicola subsp. Baizongia pistaciae (strain Bp).